A 141-amino-acid polypeptide reads, in one-letter code: Large ribosomal subunit protein uL11 (141 aa).

It belongs to the universal ribosomal protein uL11 family. Part of the ribosomal stalk of the 50S ribosomal subunit. Interacts with L10 and the large rRNA to form the base of the stalk. L10 forms an elongated spine to which L12 dimers bind in a sequential fashion forming a multimeric L10(L12)X complex. In terms of processing, one or more lysine residues are methylated.

Its function is as follows. Forms part of the ribosomal stalk which helps the ribosome interact with GTP-bound translation factors. In Lactobacillus acidophilus (strain ATCC 700396 / NCK56 / N2 / NCFM), this protein is Large ribosomal subunit protein uL11.